A 458-amino-acid polypeptide reads, in one-letter code: MSALSSNRLPNRASLVTNRAFSALEGFLHVEAFSGIVLLLAAAAALIFANSQYASVYESLWHTPLGFNFGHFTLSWDLHFWVNDALMTVFFLVAGMEIRREIHEGALADFKQAILPIVSAIGGVCFPALIYLSFNFNSEHTHGWAVPTATDIAFALGILALLGKKIPANLHVILLSLAIIDDIIAVLIIAFFYSTNIDPSGLAIAIAGIALVLFFQWIGLASAWLYILPGAIIWWGLMITGVHPSLTGVILGMMTPVFPTRTLVAPLTILSNAMQILQEKNIKTDLHHISTALKKMRKGQRDMIAPVIRVQKTLHPWVAYGVMPIFAFANAGVSFANFDLSSHESFLVVLSVVIGLFIGKPLGIITASYLAVKSGLCRLPPHMTWTGILLIGFLAGIGFTMSIFVSMLAFKDIVLLDSAKIGVLCGSGLSALAGLGYGLIYIKRNKNKKVLHNLNGIK.

The next 12 helical transmembrane spans lie at 27–47, 78–98, 114–134, 143–163, 172–192, 201–221, 222–242, 249–269, 316–336, 346–366, 388–408, and 421–441; these read FLHVEAFSGIVLLLAAAAALI, LHFWVNDALMTVFFLVAGMEI, ILPIVSAIGGVCFPALIYLSF, GWAVPTATDIAFALGILALLG, VILLSLAIIDDIIAVLIIAFF, GLAIAIAGIALVLFFQWIGLA, SAWLYILPGAIIWWGLMITGV, VILGMMTPVFPTRTLVAPLTI, PWVAYGVMPIFAFANAGVSFA, FLVVLSVVIGLFIGKPLGIIT, ILLIGFLAGIGFTMSIFVSML, and IGVLCGSGLSALAGLGYGLIY.

It belongs to the NhaA Na(+)/H(+) (TC 2.A.33) antiporter family.

Its subcellular location is the cell inner membrane. The catalysed reaction is Na(+)(in) + 2 H(+)(out) = Na(+)(out) + 2 H(+)(in). Its function is as follows. Na(+)/H(+) antiporter that extrudes sodium in exchange for external protons. This is Na(+)/H(+) antiporter NhaA from Bartonella quintana (strain Toulouse) (Rochalimaea quintana).